The chain runs to 173 residues: Alpha-crystallin A chain (173 aa).

N-acetylmethionine is present on M1. The tract at residues 1–63 is required for complex formation with BFSP1 and BFSP2; it reads MDIAIQHPWF…RTVLDSGISE (63 aa). Q6 carries the post-translational modification Deamidated glutamine; partial. S45 is subject to Phosphoserine. Residue Q50 is modified to Deamidated glutamine; partial. The 111-residue stretch at 52 to 162 folds into the sHSP domain; sequence LFRTVLDSGI…GHSERAIPVS (111 aa). K70 carries the post-translational modification N6-acetyllysine. The residue at position 90 (Q90) is a Deamidated glutamine; partial. K99 is modified (N6-acetyllysine). H100 is a Zn(2+) binding site. Deamidated asparagine; partial is present on N101. Residues E102 and H107 each coordinate Zn(2+). S122 bears the Phosphoserine mark. N123 bears the Deamidated asparagine; partial mark. The disordered stretch occupies residues 144-173; that stretch reads PKVPSGLDAGHSERAIPVSREEKPSSAPSS. A compositionally biased stretch (basic and acidic residues) spans 153 to 167; the sequence is GHSERAIPVSREEKP. Position 154 (H154) interacts with Zn(2+). A glycan (O-linked (GlcNAc) serine) is linked at S162.

It belongs to the small heat shock protein (HSP20) family. Heteromer composed of three CRYAA and one CRYAB subunits. Inter-subunit bridging via zinc ions enhances stability, which is crucial as there is no protein turn over in the lens. Can also form homodimers and homotetramers (dimers of dimers) which serve as the building blocks of homooligomers. Within homooligomers, the zinc-binding motif is created from residues of 3 different molecules. His-100 and Glu-102 from one molecule are ligands of the zinc ion, and His-107 and His-154 residues from additional molecules complete the site with tetrahedral coordination geometry. Part of a complex required for lens intermediate filament formation composed of BFSP1, BFSP2 and CRYAA. Acetylation at Lys-70 may increase chaperone activity. In terms of processing, undergoes age-dependent proteolytical cleavage at the C-terminus.

Its subcellular location is the cytoplasm. The protein localises to the nucleus. In terms of biological role, contributes to the transparency and refractive index of the lens. Acts as a chaperone, preventing aggregation of various proteins under a wide range of stress conditions. Required for the correct formation of lens intermediate filaments as part of a complex composed of BFSP1, BFSP2 and CRYAA. This Tapirus indicus (Asiatic tapir) protein is Alpha-crystallin A chain (CRYAA).